A 345-amino-acid chain; its full sequence is Phosphoribosylformylglycinamidine cyclo-ligase (345 aa).

The protein belongs to the AIR synthase family.

It is found in the cytoplasm. The catalysed reaction is 2-formamido-N(1)-(5-O-phospho-beta-D-ribosyl)acetamidine + ATP = 5-amino-1-(5-phospho-beta-D-ribosyl)imidazole + ADP + phosphate + H(+). The protein operates within purine metabolism; IMP biosynthesis via de novo pathway; 5-amino-1-(5-phospho-D-ribosyl)imidazole from N(2)-formyl-N(1)-(5-phospho-D-ribosyl)glycinamide: step 2/2. This chain is Phosphoribosylformylglycinamidine cyclo-ligase, found in Mannheimia succiniciproducens (strain KCTC 0769BP / MBEL55E).